We begin with the raw amino-acid sequence, 118 residues long: Ribonuclease P protein component (118 aa).

This sequence belongs to the RnpA family. As to quaternary structure, consists of a catalytic RNA component (M1 or rnpB) and a protein subunit.

The enzyme catalyses Endonucleolytic cleavage of RNA, removing 5'-extranucleotides from tRNA precursor.. RNaseP catalyzes the removal of the 5'-leader sequence from pre-tRNA to produce the mature 5'-terminus. It can also cleave other RNA substrates such as 4.5S RNA. The protein component plays an auxiliary but essential role in vivo by binding to the 5'-leader sequence and broadening the substrate specificity of the ribozyme. This is Ribonuclease P protein component from Rickettsia rickettsii (strain Iowa).